The chain runs to 121 residues: Small ribosomal subunit protein uS13 (121 aa).

The disordered stretch occupies residues 94–121 (GLPLRGQRTRTNARTRKGPRRAAQSLKK).

Belongs to the universal ribosomal protein uS13 family. In terms of assembly, part of the 30S ribosomal subunit. Forms a loose heterodimer with protein S19. Forms two bridges to the 50S subunit in the 70S ribosome.

Located at the top of the head of the 30S subunit, it contacts several helices of the 16S rRNA. In the 70S ribosome it contacts the 23S rRNA (bridge B1a) and protein L5 of the 50S subunit (bridge B1b), connecting the 2 subunits; these bridges are implicated in subunit movement. Contacts the tRNAs in the A and P-sites. This chain is Small ribosomal subunit protein uS13, found in Paraburkholderia phymatum (strain DSM 17167 / CIP 108236 / LMG 21445 / STM815) (Burkholderia phymatum).